The following is an 861-amino-acid chain: Leucine--tRNA ligase (861 aa).

The short motif at 42–52 (PYPSGRLHMGH) is the 'HIGH' region element. The 'KMSKS' region motif lies at 619-623 (KMSKS). ATP is bound at residue Lys-622.

The protein belongs to the class-I aminoacyl-tRNA synthetase family.

It localises to the cytoplasm. It catalyses the reaction tRNA(Leu) + L-leucine + ATP = L-leucyl-tRNA(Leu) + AMP + diphosphate. The sequence is that of Leucine--tRNA ligase from Haemophilus influenzae (strain ATCC 51907 / DSM 11121 / KW20 / Rd).